The chain runs to 571 residues: Methionine--tRNA ligase (571 aa).

The short motif at 10–20 (PYVNAVPHLGN) is the 'HIGH' region element. The Zn(2+) site is built by Cys-143, Cys-146, Cys-156, and Cys-159. The 'KMSKS' region motif lies at 333-337 (KFSKS). An ATP-binding site is contributed by Lys-336.

It belongs to the class-I aminoacyl-tRNA synthetase family. MetG type 1 subfamily. Requires Zn(2+) as cofactor.

It localises to the cytoplasm. It carries out the reaction tRNA(Met) + L-methionine + ATP = L-methionyl-tRNA(Met) + AMP + diphosphate. Its function is as follows. Is required not only for elongation of protein synthesis but also for the initiation of all mRNA translation through initiator tRNA(fMet) aminoacylation. This is Methionine--tRNA ligase from Sulfurisphaera tokodaii (strain DSM 16993 / JCM 10545 / NBRC 100140 / 7) (Sulfolobus tokodaii).